A 422-amino-acid polypeptide reads, in one-letter code: MAKNIQAIRGMNDCLPTQSPLWQKVESAVKSVVSAYGYNEVRMPIVEETNLFSRAVGEETDVVSKEMYTFDDRNGDSLTLRPEGTAGCVRSCIQNSLINRDEQRLWYMGPMFRHERPQKGRYRQFHQCGVEVFGLDGPDVDAELIMMTARLWRELGIDKHVRLELNSIGSQEDRVSYRTALVAFLEQHIDVLDEDCKRRMHTNPLRVLDTKNPDVQAILGDAPRLSEYLGEESKQHFAGLCELLDAVGIEYQVNERLVRGLDYYNRTVFEWITDSLGAQGTVCGGGRYDGLVEQLGGKATNAVGFAMGLERLVLMMETLELTEVRRSVDVYMVAAGEGTMIAGMQLANQLRDTVEGVRVMNHFGGGNFKKQFKRADKVGAVVALVLGENEVADNTVVLKDLVGGEQQTVSQTEVAEKVAALI.

This sequence belongs to the class-II aminoacyl-tRNA synthetase family. In terms of assembly, homodimer.

The protein localises to the cytoplasm. It catalyses the reaction tRNA(His) + L-histidine + ATP = L-histidyl-tRNA(His) + AMP + diphosphate + H(+). The chain is Histidine--tRNA ligase from Vibrio atlanticus (strain LGP32) (Vibrio splendidus (strain Mel32)).